We begin with the raw amino-acid sequence, 308 residues long: Cyclin-D2-1 (308 aa).

The segment at 286–308 (EGLSYDSSSPPPPKRRKRSPPGT) is disordered. Basic residues predominate over residues 298–308 (PKRRKRSPPGT).

The protein belongs to the cyclin family. Cyclin D subfamily.

The protein is Cyclin-D2-1 (CYCD2-1) of Oryza sativa subsp. japonica (Rice).